The sequence spans 519 residues: Ribonuclease Y (519 aa).

A helical membrane pass occupies residues 3-23 (PMTVLISILLTLLGLVVGYYV). The KH domain occupies 209–272 (TVSVVNLPND…ETARIALDKL (64 aa)). Residues 335-428 (VLKHSMEVAF…VAAADALSAA (94 aa)) enclose the HD domain.

Belongs to the RNase Y family.

It is found in the cell membrane. In terms of biological role, endoribonuclease that initiates mRNA decay. The chain is Ribonuclease Y from Bacillus velezensis (strain DSM 23117 / BGSC 10A6 / LMG 26770 / FZB42) (Bacillus amyloliquefaciens subsp. plantarum).